We begin with the raw amino-acid sequence, 210 residues long: Cuticle collagen 2C (210 aa).

The segment at 11–210 (CTGGQAGPPG…GVFFEDGTRR (200 aa)) is disordered. Pro residues-rich tracts occupy residues 40–76 (PGRP…PGEP) and 88–103 (DAPP…PGPP). The segment covering 105-122 (KAGAPGAAGQPGANAPSE) has biased composition (low complexity). The segment covering 123–144 (PLVPGPPGPPGPTGPEGPPGPN) has biased composition (pro residues). The span at 167–179 (HPGAPGNAGHPGQ) shows a compositional bias: low complexity.

This sequence belongs to the cuticular collagen family.

Functionally, nematode cuticles are composed largely of collagen-like proteins. The cuticle functions both as an exoskeleton and as a barrier to protect the worm from its environment. This is Cuticle collagen 2C (2C) from Haemonchus contortus (Barber pole worm).